Reading from the N-terminus, the 413-residue chain is Gamma-glutamyl phosphate reductase (413 aa).

The protein belongs to the gamma-glutamyl phosphate reductase family.

The protein localises to the cytoplasm. The catalysed reaction is L-glutamate 5-semialdehyde + phosphate + NADP(+) = L-glutamyl 5-phosphate + NADPH + H(+). The protein operates within amino-acid biosynthesis; L-proline biosynthesis; L-glutamate 5-semialdehyde from L-glutamate: step 2/2. Its function is as follows. Catalyzes the NADPH-dependent reduction of L-glutamate 5-phosphate into L-glutamate 5-semialdehyde and phosphate. The product spontaneously undergoes cyclization to form 1-pyrroline-5-carboxylate. The polypeptide is Gamma-glutamyl phosphate reductase (Thermus thermophilus (strain ATCC 27634 / DSM 579 / HB8)).